We begin with the raw amino-acid sequence, 185 residues long: uncharacterized protein (185 aa).

Topologically, residues 1–69 are cytoplasmic; it reads MSSFIDSIKS…SSDCSRAERT (69 aa). Residues 70 to 90 form a helical membrane-spanning segment; it reads FNLILFAIVDLVICCESMAFF. Residue Asn91 is a topological domain, extracellular. The chain crosses the membrane as a helical span at residues 92–112; sequence LLLKLPSMLLVSFLTMLVFSI. At 113-118 the chain is on the cytoplasmic side; sequence SYSWSA. The helical transmembrane segment at 119 to 139 threads the bilayer; sequence FNWISFAFSSASFLMKACILF. Residues 140-185 are Extracellular-facing; that stretch reads NSSFTWFGVKAVIAEDMLYRMVRGLFCASFVKQLQTTFLATAIVLC.

The protein resides in the membrane. This is an uncharacterized protein from Saccharomyces cerevisiae (strain ATCC 204508 / S288c) (Baker's yeast).